We begin with the raw amino-acid sequence, 198 residues long: Glycerol-3-phosphate acyltransferase (198 aa).

Helical transmembrane passes span 1–21 (MNLLILFFGYLFGSFPSGYLA), 53–73 (IIVFLLDVFKGVLSILLAKYL), 79–99 (WQVAIGLSTLIGHIWPVWLNW), 111–131 (IFLGLSWQVGLATLGVFIIMI), 136–156 (IVSLASVSASLALPLIMFLSF), and 158–178 (GSNISLPFLIVSLLAMLLVIW).

This sequence belongs to the PlsY family. As to quaternary structure, probably interacts with PlsX.

The protein localises to the cell inner membrane. The catalysed reaction is an acyl phosphate + sn-glycerol 3-phosphate = a 1-acyl-sn-glycero-3-phosphate + phosphate. Its pathway is lipid metabolism; phospholipid metabolism. Catalyzes the transfer of an acyl group from acyl-phosphate (acyl-PO(4)) to glycerol-3-phosphate (G3P) to form lysophosphatidic acid (LPA). This enzyme utilizes acyl-phosphate as fatty acyl donor, but not acyl-CoA or acyl-ACP. The sequence is that of Glycerol-3-phosphate acyltransferase from Prochlorococcus marinus (strain NATL1A).